The following is a 127-amino-acid chain: MQIINVVYSFLFAAAMLPVVHSLGINCRGSSQCGLSGGNLMVRIRDQACGNQGQTWCPGERRAKVCGTGNSISAYVQSTNNCISGTEACRHLTNLVNHGCRVCGSDPLYAGNDVSRGQLTVNYVNSC.

Residues 1 to 22 form the signal peptide; it reads MQIINVVYSFLFAAAMLPVVHS. Cystine bridges form between Cys-27–Cys-100, Cys-33–Cys-103, Cys-49–Cys-89, Cys-57–Cys-82, and Cys-66–Cys-127.

As to quaternary structure, monomer.

Its subcellular location is the secreted. Its function is as follows. This protein is lethal to sensitive cells of the same or related species. It specifically inhibits voltage-gated calcium channels. It inhibits cell growth and division by blocking calcium import. This chain is KP4 killer toxin (M2A), found in Mycosarcoma maydis (Corn smut fungus).